Reading from the N-terminus, the 224-residue chain is Leucyl/phenylalanyl-tRNA--protein transferase (224 aa).

It belongs to the L/F-transferase family.

The protein resides in the cytoplasm. The catalysed reaction is N-terminal L-lysyl-[protein] + L-leucyl-tRNA(Leu) = N-terminal L-leucyl-L-lysyl-[protein] + tRNA(Leu) + H(+). It carries out the reaction N-terminal L-arginyl-[protein] + L-leucyl-tRNA(Leu) = N-terminal L-leucyl-L-arginyl-[protein] + tRNA(Leu) + H(+). It catalyses the reaction L-phenylalanyl-tRNA(Phe) + an N-terminal L-alpha-aminoacyl-[protein] = an N-terminal L-phenylalanyl-L-alpha-aminoacyl-[protein] + tRNA(Phe). Its function is as follows. Functions in the N-end rule pathway of protein degradation where it conjugates Leu, Phe and, less efficiently, Met from aminoacyl-tRNAs to the N-termini of proteins containing an N-terminal arginine or lysine. In Rhodopseudomonas palustris (strain HaA2), this protein is Leucyl/phenylalanyl-tRNA--protein transferase.